A 71-amino-acid polypeptide reads, in one-letter code: MKKTFYHYMMKHRAALFKNEISDLAEAMYDDLSFPKQSEDYDVISSYLELSGMLESMSIFDDAWDLYIQER.

The protein belongs to the UPF0346 family.

This Bacillus mycoides (strain KBAB4) (Bacillus weihenstephanensis) protein is UPF0346 protein BcerKBAB4_2120.